The primary structure comprises 211 residues: Probable nicotinate-nucleotide adenylyltransferase (211 aa).

It belongs to the NadD family.

The catalysed reaction is nicotinate beta-D-ribonucleotide + ATP + H(+) = deamido-NAD(+) + diphosphate. It participates in cofactor biosynthesis; NAD(+) biosynthesis; deamido-NAD(+) from nicotinate D-ribonucleotide: step 1/1. In terms of biological role, catalyzes the reversible adenylation of nicotinate mononucleotide (NaMN) to nicotinic acid adenine dinucleotide (NaAD). The sequence is that of Probable nicotinate-nucleotide adenylyltransferase from Legionella pneumophila (strain Corby).